The following is a 123-amino-acid chain: Large ribosomal subunit protein eL8 (123 aa).

It belongs to the eukaryotic ribosomal protein eL8 family. In terms of assembly, part of the 50S ribosomal subunit. Probably part of the RNase P complex.

It is found in the cytoplasm. Functionally, multifunctional RNA-binding protein that recognizes the K-turn motif in ribosomal RNA, the RNA component of RNase P, box H/ACA, box C/D and box C'/D' sRNAs. This chain is Large ribosomal subunit protein eL8, found in Thermococcus gammatolerans (strain DSM 15229 / JCM 11827 / EJ3).